The sequence spans 155 residues: Large ribosomal subunit protein bL9c (155 aa).

It belongs to the bacterial ribosomal protein bL9 family.

Its subcellular location is the plastid. The protein localises to the chloroplast. Binds to the 23S rRNA. The chain is Large ribosomal subunit protein bL9c from Pyropia yezoensis (Susabi-nori).